A 166-amino-acid chain; its full sequence is Putative protein PTGES3L (166 aa).

In terms of domain architecture, CS spans 46-154 (RQHARTLWYD…RPPPAMDDLD (109 aa)). The disordered stretch occupies residues 142–166 (STKRPPPAMDDLDDDSDSADDATSN). The span at 151 to 166 (DDLDDDSDSADDATSN) shows a compositional bias: acidic residues.

This sequence belongs to the p23/wos2 family.

This chain is Putative protein PTGES3L, found in Homo sapiens (Human).